Consider the following 266-residue polypeptide: Glutamate racemase (266 aa).

Substrate contacts are provided by residues 9–10 (DS) and 41–42 (YG). Cys-73 serves as the catalytic Proton donor/acceptor. 74–75 (NT) contributes to the substrate binding site. The Proton donor/acceptor role is filled by Cys-183. A substrate-binding site is contributed by 184–185 (TH).

This sequence belongs to the aspartate/glutamate racemases family.

It carries out the reaction L-glutamate = D-glutamate. It participates in cell wall biogenesis; peptidoglycan biosynthesis. Functionally, provides the (R)-glutamate required for cell wall biosynthesis. This Shewanella woodyi (strain ATCC 51908 / MS32) protein is Glutamate racemase.